A 148-amino-acid chain; its full sequence is Lysozyme C (148 aa).

The first 18 residues, 1-18, serve as a signal peptide directing secretion; it reads MKAVIILGLVLLSVTVQG. One can recognise a C-type lysozyme domain in the interval 19–148; it reads KIFERCELAR…VSQYVQGCGV (130 aa). 4 disulfide bridges follow: cysteine 24/cysteine 146, cysteine 48/cysteine 134, cysteine 83/cysteine 99, and cysteine 95/cysteine 113. Active-site residues include glutamate 53 and aspartate 71.

This sequence belongs to the glycosyl hydrolase 22 family. As to quaternary structure, monomer.

The catalysed reaction is Hydrolysis of (1-&gt;4)-beta-linkages between N-acetylmuramic acid and N-acetyl-D-glucosamine residues in a peptidoglycan and between N-acetyl-D-glucosamine residues in chitodextrins.. Functionally, lysozymes have primarily a bacteriolytic function; those in tissues and body fluids are associated with the monocyte-macrophage system and enhance the activity of immunoagents. The sequence is that of Lysozyme C (LYZ) from Allenopithecus nigroviridis (Allen's swamp monkey).